The primary structure comprises 751 residues: ATP-dependent DNA helicase Hel308 (751 aa).

ATP-binding positions include Q20 and 39-46 (IPTASGKT). The region spanning 26 to 196 (EGLLDKSKNF…WLNAKLVTDE (171 aa)) is the Helicase ATP-binding domain. The short motif at 143 to 146 (DEIH) is the DEAH box element. The Helicase C-terminal domain occupies 235–435 (NLTDLIVDSV…VLRVHILGLI (201 aa)).

The protein belongs to the helicase family. Hel308 subfamily. Monomer.

The catalysed reaction is Couples ATP hydrolysis with the unwinding of duplex DNA by translocating in the 3'-5' direction.. It catalyses the reaction ATP + H2O = ADP + phosphate + H(+). In terms of biological role, DNA-dependent ATPase and 3'-5' DNA helicase that may be involved in repair of stalled replication forks. This chain is ATP-dependent DNA helicase Hel308, found in Methanococcus vannielii (strain ATCC 35089 / DSM 1224 / JCM 13029 / OCM 148 / SB).